Reading from the N-terminus, the 181-residue chain is Oligoribonuclease (181 aa).

Positions 8-171 (LIWIDLEMTG…DDIRESVAEL (164 aa)) constitute an Exonuclease domain. Y129 is a catalytic residue.

The protein belongs to the oligoribonuclease family.

The protein localises to the cytoplasm. In terms of biological role, 3'-to-5' exoribonuclease specific for small oligoribonucleotides. The sequence is that of Oligoribonuclease from Klebsiella pneumoniae subsp. pneumoniae (strain ATCC 700721 / MGH 78578).